We begin with the raw amino-acid sequence, 232 residues long: Noggin (232 aa).

Residues 1–27 (MERCPSLGVTLYALVVVLGLRAAPAGG) form the signal peptide. An N-linked (GlcNAc...) asparagine glycan is attached at N62. Residues 77–99 (GFMATSPPEDRPGGGGGPAGGAE) form a disordered region. Disulfide bonds link C155-C192, C178-C228, C184-C230, and C207-C215.

The protein belongs to the noggin family. Homodimer. Interacts with GDF5; inhibits chondrocyte differentiation. In terms of tissue distribution, expressed in condensing cartilage and immature chondrocytes.

It is found in the secreted. In terms of biological role, essential for cartilage morphogenesis and joint formation. Inhibitor of bone morphogenetic proteins (BMP) signaling which is required for growth and patterning of the neural tube and somite. Inhibits chondrocyte differentiation through its interaction with GDF5 and, probably, GDF6. The polypeptide is Noggin (Nog) (Mus musculus (Mouse)).